Consider the following 219-residue polypeptide: 2-hydroxy-3-keto-5-methylthiopentenyl-1-phosphate phosphatase (219 aa).

This sequence belongs to the HAD-like hydrolase superfamily. MtnX family.

It catalyses the reaction 2-hydroxy-5-methylsulfanyl-3-oxopent-1-enyl phosphate + H2O = 1,2-dihydroxy-5-(methylsulfanyl)pent-1-en-3-one + phosphate. It functions in the pathway amino-acid biosynthesis; L-methionine biosynthesis via salvage pathway; L-methionine from S-methyl-5-thio-alpha-D-ribose 1-phosphate: step 4/6. Its function is as follows. Dephosphorylates 2-hydroxy-3-keto-5-methylthiopentenyl-1-phosphate (HK-MTPenyl-1-P) yielding 1,2-dihydroxy-3-keto-5-methylthiopentene (DHK-MTPene). The polypeptide is 2-hydroxy-3-keto-5-methylthiopentenyl-1-phosphate phosphatase (Bacillus cereus (strain 03BB102)).